The following is a 651-amino-acid chain: Acetyl-coenzyme A synthetase (651 aa).

CoA is bound by residues 191–194, T311, and N335; that span reads RGGK. ATP-binding positions include 387–389, 411–416, D500, and R515; these read GEP and DTWWQT. S523 contributes to the CoA binding site. R526 provides a ligand contact to ATP. V537, H539, and V542 together coordinate Mg(2+). R584 contributes to the CoA binding site. K609 is modified (N6-acetyllysine).

It belongs to the ATP-dependent AMP-binding enzyme family. Mg(2+) serves as cofactor. In terms of processing, acetylated. Deacetylation by the SIR2-homolog deacetylase activates the enzyme.

It carries out the reaction acetate + ATP + CoA = acetyl-CoA + AMP + diphosphate. Its function is as follows. Catalyzes the conversion of acetate into acetyl-CoA (AcCoA), an essential intermediate at the junction of anabolic and catabolic pathways. AcsA undergoes a two-step reaction. In the first half reaction, AcsA combines acetate with ATP to form acetyl-adenylate (AcAMP) intermediate. In the second half reaction, it can then transfer the acetyl group from AcAMP to the sulfhydryl group of CoA, forming the product AcCoA. The polypeptide is Acetyl-coenzyme A synthetase (Stutzerimonas stutzeri (strain A1501) (Pseudomonas stutzeri)).